Here is a 565-residue protein sequence, read N- to C-terminus: Granule-bound starch synthase 1b, chloroplastic/amyloplastic (565 aa).

The N-terminal 34 residues, 1–34 (VFLSMRNKTQLAKRRATNYETHRNSSRTSSPIVC), are a transit peptide targeting the chloroplast. Lysine 52 provides a ligand contact to ADP-alpha-D-glucose.

It belongs to the glycosyltransferase 1 family. Bacterial/plant glycogen synthase subfamily.

The protein localises to the plastid. Its subcellular location is the chloroplast. It localises to the amyloplast. It carries out the reaction an NDP-alpha-D-glucose + [(1-&gt;4)-alpha-D-glucosyl](n) = [(1-&gt;4)-alpha-D-glucosyl](n+1) + a ribonucleoside 5'-diphosphate + H(+). It participates in glycan biosynthesis; starch biosynthesis. Its function is as follows. Involved in the synthesis of amylose in endosperm. The chain is Granule-bound starch synthase 1b, chloroplastic/amyloplastic from Hordeum vulgare (Barley).